The primary structure comprises 670 residues: DNA ligase (670 aa).

NAD(+)-binding positions include Asp35–Asp39, Ser84–Leu85, and Glu116. Lys118 functions as the N6-AMP-lysine intermediate in the catalytic mechanism. NAD(+) contacts are provided by Arg139, Glu176, Lys293, and Lys317. 4 residues coordinate Zn(2+): Cys411, Cys414, Cys429, and Cys435. The BRCT domain occupies Val592–Ser670.

The protein belongs to the NAD-dependent DNA ligase family. LigA subfamily. Mg(2+) serves as cofactor. Mn(2+) is required as a cofactor.

It catalyses the reaction NAD(+) + (deoxyribonucleotide)n-3'-hydroxyl + 5'-phospho-(deoxyribonucleotide)m = (deoxyribonucleotide)n+m + AMP + beta-nicotinamide D-nucleotide.. DNA ligase that catalyzes the formation of phosphodiester linkages between 5'-phosphoryl and 3'-hydroxyl groups in double-stranded DNA using NAD as a coenzyme and as the energy source for the reaction. It is essential for DNA replication and repair of damaged DNA. In Coxiella burnetii (strain RSA 331 / Henzerling II), this protein is DNA ligase.